A 411-amino-acid polypeptide reads, in one-letter code: UPF0754 membrane protein Npun_R4433 (411 aa).

Transmembrane regions (helical) follow at residues 3–23 and 387–407; these read WSHL…GYFT and IVTL…VFLV.

This sequence belongs to the UPF0754 family.

It localises to the cell inner membrane. The chain is UPF0754 membrane protein Npun_R4433 from Nostoc punctiforme (strain ATCC 29133 / PCC 73102).